The primary structure comprises 98 residues: U10-barytoxin-Tl1a (98 aa).

The N-terminal stretch at 1-21 (MKTLVLVAVLGVASLYLLSSA) is a signal peptide. Positions 22–50 (SEVQQLSPAEEEFRAFVSTFGGLFETEER) are excised as a propeptide. 3 disulfides stabilise this stretch: Cys-57/Cys-71, Cys-64/Cys-76, and Cys-70/Cys-89.

It belongs to the neurotoxin 10 (Hwtx-1) family. 27 (ICK-3) subfamily. In terms of tissue distribution, expressed by the venom gland.

It is found in the secreted. Functionally, ion channel inhibitor. This chain is U10-barytoxin-Tl1a, found in Trittame loki (Brush-footed trapdoor spider).